A 401-amino-acid chain; its full sequence is Argininosuccinate synthase (401 aa).

9–17 lines the ATP pocket; it reads AYSGGLDTS. An L-citrulline-binding site is contributed by Y88. G118 contributes to the ATP binding site. Residues T120, N124, and D125 each coordinate L-aspartate. N124 is an L-citrulline binding site. Residues R128, S177, S186, E262, and Y274 each contribute to the L-citrulline site.

It belongs to the argininosuccinate synthase family. Type 1 subfamily. As to quaternary structure, homotetramer.

The protein resides in the cytoplasm. It catalyses the reaction L-citrulline + L-aspartate + ATP = 2-(N(omega)-L-arginino)succinate + AMP + diphosphate + H(+). The protein operates within amino-acid biosynthesis; L-arginine biosynthesis; L-arginine from L-ornithine and carbamoyl phosphate: step 2/3. This chain is Argininosuccinate synthase, found in Chlorobaculum tepidum (strain ATCC 49652 / DSM 12025 / NBRC 103806 / TLS) (Chlorobium tepidum).